The sequence spans 76 residues: Acyl carrier protein (76 aa).

The Carrier domain maps to 1-76 (MAIFDDIKEV…DVVRYIETNK (76 aa)). Position 36 is an O-(pantetheine 4'-phosphoryl)serine (serine 36).

It belongs to the acyl carrier protein (ACP) family. Post-translationally, 4'-phosphopantetheine is transferred from CoA to a specific serine of apo-ACP by AcpS. This modification is essential for activity because fatty acids are bound in thioester linkage to the sulfhydryl of the prosthetic group.

Its subcellular location is the cytoplasm. Its pathway is lipid metabolism; fatty acid biosynthesis. Its function is as follows. Carrier of the growing fatty acid chain in fatty acid biosynthesis. The protein is Acyl carrier protein of Wolinella succinogenes (strain ATCC 29543 / DSM 1740 / CCUG 13145 / JCM 31913 / LMG 7466 / NCTC 11488 / FDC 602W) (Vibrio succinogenes).